We begin with the raw amino-acid sequence, 217 residues long: Growth hormone variant (217 aa).

The first 26 residues, 1–26 (MAAGSWTCLILAIALLCLPWLQEGSA), serve as a signal peptide directing secretion. 2 cysteine pairs are disulfide-bonded: C79/C191 and C208/C215. S132 and S176 each carry phosphoserine.

Belongs to the somatotropin/prolactin family. In terms of tissue distribution, expressed in the placenta.

Its subcellular location is the secreted. In terms of biological role, plays an important role in growth control. Its major role in stimulating body growth is to stimulate the liver and other tissues to secrete IGF1. It stimulates both the differentiation and proliferation of myoblasts. It also stimulates amino acid uptake and protein synthesis in muscle and other tissues. This is Growth hormone variant (GH2) from Macaca mulatta (Rhesus macaque).